Here is a 79-residue protein sequence, read N- to C-terminus: Sulfur carrier protein TusA (79 aa).

The active-site Cysteine persulfide intermediate is cysteine 17.

It belongs to the sulfur carrier protein TusA family.

It localises to the cytoplasm. Functionally, sulfur carrier protein which probably makes part of a sulfur-relay system. The sequence is that of Sulfur carrier protein TusA from Pseudoalteromonas translucida (strain TAC 125).